Reading from the N-terminus, the 428-residue chain is Immunoglobulin superfamily containing leucine-rich repeat protein (428 aa).

The signal sequence occupies residues 1–18 (MQELHLLWWALLLGLAQA). One can recognise an LRRNT domain in the interval 19–50 (CPEPCDCGEKYGFQIADCAYRDLESVPPGFPA). The N-linked (GlcNAc...) asparagine glycan is linked to Asn-51. LRR repeat units follow at residues 51–72 (NVTT…AFRE), 75–96 (LLQS…ALAS), 99–122 (HLKS…HNLS), 123–144 (ALQL…AFRS), and 147–168 (ALRS…TFTP). The 52-residue stretch at 180-231 (NPFDCTCGIVWLKTWALTTAVSIPEQDNIACTSPHVLKGTPLSRLPPLPCSA) folds into the LRRCT domain. The 112-residue stretch at 232–343 (PSVQLSYQPS…GSAESSVDVA (112 aa)) folds into the Ig-like domain. A disulfide bond links Cys-257 and Cys-327. N-linked (GlcNAc...) asparagine glycosylation occurs at Asn-309.

Expressed in various tissues including retina, heart, skeletal muscle, prostate, ovary, small intestine, thyroid, adrenal cortex, testis, stomach and spinal cord.

Its subcellular location is the secreted. The protein is Immunoglobulin superfamily containing leucine-rich repeat protein (ISLR) of Homo sapiens (Human).